The sequence spans 517 residues: MLRAAARFGPRLGRRLLSAAATQAVPAPNQQPEVFCNQIFINNEWHDAVSRKTFPTVNPSTGEVICQVAEGDKEDVDKAVKAARAAFQLGSPWRRMDASHRGRLLNRLADLIERDRTYLAALETLDNGKPYVISYLVDLDMVLKCLRYYAGWADKYHGKTIPIDGDFFSYTRHEPVGVCGQIIPWNFPLLMQAWKLGPALATGNVVVMKVAEQTPLTALYVANLIKEAGFPPGVVNIVPGFGPTAGAAIASHEDVDKVAFTGSTEIGRVIQVAAGSSNLKRVTLELGGKSPNIIMSDADMDWAVEQAHFALFFNQGQCCCAGSRTFVQEDIYDEFVERSVARAKSRVVGNPFDSKTEQGPQVDETQFKKILGYINTGKQEGAKLLCGGGIAADRGYFIQPTVFGDVQDGMTIAKEEIFGPVMQILKFKTIEEVVGRANNSTYGLAAAVFTKDLDKANYLSQALQAGTVWVNCYDVFGAQSPFGGYKMSGSGRELGEYGLQAYTEVKTVTVKVPQKNS.

A mitochondrion-targeting transit peptide spans 1–17 (MLRAAARFGPRLGRRLL). An SIFI-degron motif is present at residues 9–24 (GPRLGRRLLSAAATQA). N6-acetyllysine occurs at positions 52, 73, 78, and 159. 262-267 (GSTEIG) is an NAD(+) binding site. The active-site Proton acceptor is E285. Residue C319 is the Nucleophile of the active site. N6-acetyllysine is present on residues K368, K383, K426, K428, and K451.

Belongs to the aldehyde dehydrogenase family. As to quaternary structure, homotetramer. In terms of processing, in response to mitochondrial stress, the precursor protein is ubiquitinated by the SIFI complex in the cytoplasm before mitochondrial import, leading to its degradation. Within the SIFI complex, UBR4 initiates ubiquitin chain that are further elongated or branched by KCMF1.

The protein resides in the mitochondrion matrix. The catalysed reaction is an aldehyde + NAD(+) + H2O = a carboxylate + NADH + 2 H(+). The protein operates within alcohol metabolism; ethanol degradation; acetate from ethanol: step 2/2. Required for clearance of cellular formaldehyde, a cytotoxic and carcinogenic metabolite that induces DNA damage. The polypeptide is Aldehyde dehydrogenase, mitochondrial (ALDH2) (Homo sapiens (Human)).